Here is a 509-residue protein sequence, read N- to C-terminus: L-aspartate oxidase (509 aa).

Residues 14–17 (SGIA), 45–52 (STDWAQGG), and Asp-214 each bind FAD. Arg-279 (proton donor/acceptor) is an active-site residue. Residues Glu-358 and 374–375 (SL) contribute to the FAD site. Disordered stretches follow at residues 389–412 (AAGD…PDLP) and 486–509 (NPES…DAGH). Positions 402–412 (PELRDRDPDLP) are enriched in basic and acidic residues. Acidic residues predominate over residues 499-509 (AAAEEAPDAGH).

This sequence belongs to the FAD-dependent oxidoreductase 2 family. NadB subfamily. FAD is required as a cofactor.

Its subcellular location is the cytoplasm. It catalyses the reaction L-aspartate + O2 = iminosuccinate + H2O2. Its pathway is cofactor biosynthesis; NAD(+) biosynthesis; iminoaspartate from L-aspartate (oxidase route): step 1/1. Its function is as follows. Catalyzes the oxidation of L-aspartate to iminoaspartate, the first step in the de novo biosynthesis of NAD(+). This Halobacterium salinarum (strain ATCC 700922 / JCM 11081 / NRC-1) (Halobacterium halobium) protein is L-aspartate oxidase (nadB).